The primary structure comprises 187 residues: UPF0398 protein MW1336 (187 aa).

Belongs to the UPF0398 family.

The polypeptide is UPF0398 protein MW1336 (Staphylococcus aureus (strain MW2)).